Reading from the N-terminus, the 176-residue chain is Peptide methionine sulfoxide reductase MsrA (176 aa).

Residue C12 is part of the active site.

It belongs to the MsrA Met sulfoxide reductase family.

It carries out the reaction L-methionyl-[protein] + [thioredoxin]-disulfide + H2O = L-methionyl-(S)-S-oxide-[protein] + [thioredoxin]-dithiol. The catalysed reaction is [thioredoxin]-disulfide + L-methionine + H2O = L-methionine (S)-S-oxide + [thioredoxin]-dithiol. Its function is as follows. Has an important function as a repair enzyme for proteins that have been inactivated by oxidation. Catalyzes the reversible oxidation-reduction of methionine sulfoxide in proteins to methionine. This Thermus thermophilus (strain ATCC 27634 / DSM 579 / HB8) protein is Peptide methionine sulfoxide reductase MsrA.